Here is a 450-residue protein sequence, read N- to C-terminus: MREIVHIQAGQCGNQIGAKFWEVISDEHGIDPSGNYVGDSDLQLERISVYYNEASSHKYVPRAILVDLEPGTMDSVRSGAFGHLFRPDNFIFGQSGAGNNWAKGHYTEGAELVDSVLDVVRKECENCDCLQGFQLTHSLGGGTGSGMGTLLISKVREEYPDRIMNTFSVVPSPKVSDTVVEPYNATLSIHQLVENTDETYCIDNEALYDICFRTLKLATPTYGDLNHLVSATMSGVTTSLRFPGQLNADLRKLAVNMVPFPRLHFFMPGFAPLTARGSQQYRALTVPELTQQMFDAKNMMAACDPRHGRYLTVATVFRGRMSMKEVDEQMLAIQSKNSSYFVEWIPNNVKVAVCDIPPRGLKMSSTFIGNSTAIQELFKRISEQFTAMFRRKAFLHWYTGEGMDEMEFTEAESNMNDLVSEYQQYQDATAEEEGEMYEDDDEESEAQGPK.

The MREI motif motif lies at 1 to 4; it reads MREI. GTP contacts are provided by Q11, E69, S138, G142, T143, and G144. Mg(2+) is bound at residue E69. Residue S172 is modified to Phosphoserine; by CDK1. 2 residues coordinate GTP: N204 and N226. A disordered region spans residues 422-450; sequence YQQYQDATAEEEGEMYEDDDEESEAQGPK. Positions 429 to 450 are enriched in acidic residues; sequence TAEEEGEMYEDDDEESEAQGPK. Residue E438 is modified to 5-glutamyl polyglutamate. S444 carries the phosphoserine modification.

Belongs to the tubulin family. As to quaternary structure, heterodimer of alpha- and beta-tubulin. A typical microtubule is a hollow water-filled tube with an outer diameter of 25 nm and an inner diameter of 15 nM. Alpha-beta heterodimers associate head-to-tail to form protofilaments running lengthwise along the microtubule wall with the beta-tubulin subunit facing the microtubule plus end conferring a structural polarity. Microtubules usually have 13 protofilaments but different protofilament numbers can be found in some organisms and specialized cells. Interacts with gamma-tubulin; the interaction allows microtubules to nucleate from the gamma-tubulin ring complex (gTuRC). Interacts with UNC5C (via cytoplasmic domain); this interaction is decreased by NTN1/Netrin-1. Interacts with NLRP5/MATER at cytoskeleton microtubules. Interacts with DPYSL5. Interacts with CFAP61. Mg(2+) serves as cofactor. Post-translationally, some glutamate residues at the C-terminus are polyglycylated, resulting in polyglycine chains on the gamma-carboxyl group. Glycylation is mainly limited to tubulin incorporated into axonemes (cilia and flagella) whereas glutamylation is prevalent in neuronal cells, centrioles, axonemes, and the mitotic spindle. Both modifications can coexist on the same protein on adjacent residues, and lowering polyglycylation levels increases polyglutamylation, and reciprocally. Cilia and flagella glycylation is required for their stability and maintenance. Flagella glycylation controls sperm motility. In terms of processing, some glutamate residues at the C-terminus are polyglutamylated, resulting in polyglutamate chains on the gamma-carboxyl group. Polyglutamylation plays a key role in microtubule severing by spastin (SPAST). SPAST preferentially recognizes and acts on microtubules decorated with short polyglutamate tails: severing activity by SPAST increases as the number of glutamates per tubulin rises from one to eight, but decreases beyond this glutamylation threshold. Glutamylation is also involved in cilia motility. Phosphorylated on Ser-172 by CDK1 during the cell cycle, from metaphase to telophase, but not in interphase. This phosphorylation inhibits tubulin incorporation into microtubules.

The protein localises to the cytoplasm. The protein resides in the cytoskeleton. It is found in the cell projection. It localises to the growth cone. Its subcellular location is the lamellipodium. The protein localises to the filopodium. Tubulin is the major constituent of microtubules, protein filaments consisting of alpha- and beta-tubulin heterodimers. Microtubules grow by the addition of GTP-tubulin dimers to the microtubule end, where a stabilizing cap forms. Below the cap, alpha-beta tubulin heterodimers are in GDP-bound state, owing to GTPase activity of alpha-tubulin. TUBB3 plays a critical role in proper axon guidance and maintenance. Binding of NTN1/Netrin-1 to its receptor UNC5C might cause dissociation of UNC5C from polymerized TUBB3 in microtubules and thereby lead to increased microtubule dynamics and axon repulsion. Plays a role in dorsal root ganglion axon projection towards the spinal cord. The polypeptide is Tubulin beta-3 chain (Tubb3) (Rattus norvegicus (Rat)).